A 205-amino-acid polypeptide reads, in one-letter code: Beta-crystallin B2 (205 aa).

N-acetylalanine is present on alanine 2. An N-terminal arm region spans residues 2 to 16; it reads ASDHQTQAGKPQPLN. 2 Beta/gamma crystallin 'Greek key' domains span residues 17–56 and 57–101; these read PKIIIFEQENFQGHSHELSGPCPNLKETGVEKAGSVLVQA and GPWV…RPIK. Residues 102–106 are connecting peptide; it reads VDSQE. 2 Beta/gamma crystallin 'Greek key' domains span residues 107 to 148 and 149 to 191; these read HKII…RVQS and GTWV…RRIR. The C-terminal arm stretch occupies residues 193-205; that stretch reads MQWHQRGAFHPSN.

Belongs to the beta/gamma-crystallin family. As to quaternary structure, homo/heterodimer, or complexes of higher-order. The structure of beta-crystallin oligomers seems to be stabilized through interactions between the N-terminal arms.

Crystallins are the dominant structural components of the vertebrate eye lens. This is Beta-crystallin B2 (CRYBB2) from Canis lupus familiaris (Dog).